Here is a 325-residue protein sequence, read N- to C-terminus: Bifunctional nuclease 1 (325 aa).

Residues 117 to 252 (CVHNNPQGGH…YLAYSDGMRV (136 aa)) form the BFN domain. Residues 284-318 (TKEFNILSKMMQAVDEERYDEAAEWRDKLGQFRAK) form the UVR domain.

It belongs to the bifunctional nuclease family.

The protein resides in the nucleus. Its function is as follows. Bifunctional nuclease with both RNase and DNase activities. Involved in basal defense response. Participates in abscisic acid-derived callose deposition following infection by a necrotrophic pathogen. The sequence is that of Bifunctional nuclease 1 (BBD1) from Arabidopsis thaliana (Mouse-ear cress).